The primary structure comprises 261 residues: Potassium/proton antiporter CemA (261 aa).

Transmembrane regions (helical) follow at residues 138–158 (IISH…YLIL), 184–204 (FLIL…GWEL), and 221–241 (IISG…KYWI).

Belongs to the CemA family.

The protein resides in the plastid. The protein localises to the chloroplast inner membrane. The catalysed reaction is K(+)(in) + H(+)(out) = K(+)(out) + H(+)(in). In terms of biological role, contributes to K(+)/H(+) antiport activity by supporting proton efflux to control proton extrusion and homeostasis in chloroplasts in a light-dependent manner to modulate photosynthesis. Prevents excessive induction of non-photochemical quenching (NPQ) under continuous-light conditions. Indirectly promotes efficient inorganic carbon uptake into chloroplasts. This Pinus koraiensis (Korean pine) protein is Potassium/proton antiporter CemA.